The chain runs to 331 residues: Pantothenate kinase (331 aa).

109–116 (GSVAVGKS) is a binding site for ATP.

It belongs to the prokaryotic pantothenate kinase family.

The protein localises to the cytoplasm. The catalysed reaction is (R)-pantothenate + ATP = (R)-4'-phosphopantothenate + ADP + H(+). The protein operates within cofactor biosynthesis; coenzyme A biosynthesis; CoA from (R)-pantothenate: step 1/5. The polypeptide is Pantothenate kinase (Rhizobium leguminosarum bv. trifolii (strain WSM2304)).